Here is a 393-residue protein sequence, read N- to C-terminus: Probable galacturonosyltransferase-like 8 (393 aa).

Topologically, residues 1-4 (MSSR) are cytoplasmic. The chain crosses the membrane as a helical; Signal-anchor for type II membrane protein span at residues 5-25 (FSLTVVCLIALLPFVVGIRLI). The Lumenal portion of the chain corresponds to 26-393 (PARITSVGDG…SELTDDSSFL (368 aa)). A glycan (N-linked (GlcNAc...) asparagine) is linked at Asn-226.

This sequence belongs to the glycosyltransferase 8 family.

Its subcellular location is the golgi apparatus membrane. Its pathway is glycan metabolism; pectin biosynthesis. In terms of biological role, may be involved in pectin and/or xylans biosynthesis in cell walls. The polypeptide is Probable galacturonosyltransferase-like 8 (GATL8) (Arabidopsis thaliana (Mouse-ear cress)).